A 1381-amino-acid polypeptide reads, in one-letter code: MKAPAVLAPGILVLLFTLVQRSNGECKEALTKSEMNVNMKYQLPNFTAETPIQNVVLHEHHIFLGATNYIYVLNEEDLQKVAEHRTGPVLEHPDCFPCQDCSSKANLSGGVWKDNINMALVVDTYYDDQLISCGSVNRGTCQRHVFPHNHTADIQSDVHCIFSPQIEEPSQCPDCVVSALGTKVLLSVKDRFLNFFVGNTVNSSYFPDHSLHSISVRRLKETKNGFMFLTDQSYVDVLPEFRDSYPIKYVHAFESNNFIYFLTVQRETLNAQTFHTRIIRFCSINSALHSYMEMPLECILTEKRKKRSTKKEVFNILQAAYVSKPGAQLARQIGASLNDDILFGVFAQSKPDSAEPMDRSAVCAFPIKYVNDFFNKIVNKNNVRCLQHFYGPNHEHCFNRTFQRNLLGCEARRDEYRTEFTTALQRIDLFAGQFNKVLLTSISTFVKGDLTIANLGTSEGRFIQIVVSRSVPSTPHVNFLLDSHPVSPEVIVEQPLNQDGYTLVVTGKKITKIPLNGLGCRHFQSCSQCLSAPSFVQCGWCHDKCVRSEECSSGTWTQETCLPAIYKVFPTSAPLEGGTRLTICGWDFGFRRNNKFDLKKTRVLLGNESCTLTSSESTMNTLKCTIGPAMNEHFNMSIIISNSHGTTQYSTFSYVDPIITSISPRYGPMSGGTLLTLTGNYLNSGNSRHISIGGKTCTLKSVSNSILECYTPAQTISTEFPVKLKIDLANRETSIFSYLEDPIVYEIHPTKSFISGGSTITGIGKNLNSVSVPRMVINLHEARRNFTVACQHRSNSEIICCTTPSLQQLNLQLPLKTKAFFMLDGILSKYFDLIYVHNPVFKPFEKPVMISMGNENVLEIKGNDIDPEAVKGEVLKVGNKSCENIHLHSEAVLCTVPSDLLKLNSELNIEWKQAISSTVLGKVIVQPDQNFTGLIAGVVSISIALLLLLAFFLWLKKRKQIKDLGSELVRYDARVHTPHLDRLVSARSVSPTTEMVSNESVDYRATFPEDQFPNSSQNGSCRQVQYPLPDMSPILTSGDSDISSPLLQNTVHIDLSALNPELVQAVQHVVIGPSSLIVHFNEVIGRGHFGCVYHGTLLDNDGKKIHCAVKSLNRITDIGEVSQFLTEGIIMKDFSHPNVLSLLGICLRSEGSPLVVLPYMKHGDLRNFIRNETHNPTVKDLIGFGLQVAKGMKYLASKKFVHRDLAARNCMLDEKFTVKVADFGLARDMYDKEYYSVHNKTGAKLPVKWMALESLQTQKFTTKSDVWSFGVLLWELMTRGAPPYPDVNTFDITVYLLQGRRLLQPEYCPDPLYEVMLKCWHPKAEMRPSFSELVSRISAIFSTFIGEHYVHVNATYVNVKCVAPYPSLLSSQDNADGEVDT.

The signal sequence occupies residues 1-24 (MKAPAVLAPGILVLLFTLVQRSNG). Topologically, residues 25–934 (ECKEALTKSE…VQPDQNFTGL (910 aa)) are extracellular. The 489-residue stretch at 27 to 515 (KEALTKSEMN…TGKKITKIPL (489 aa)) folds into the Sema domain. Asn-45 carries an N-linked (GlcNAc...) asparagine glycan. Disulfide bonds link Cys-95–Cys-101, Cys-98–Cys-160, Cys-133–Cys-141, and Cys-172–Cys-175. Asn-106 carries N-linked (GlcNAc...) asparagine glycosylation. N-linked (GlcNAc...) asparagine glycosylation is present at Asn-149. Residue Asn-202 is glycosylated (N-linked (GlcNAc...) asparagine). 2 cysteine pairs are disulfide-bonded: Cys-298/Cys-363 and Cys-385/Cys-397. Asn-399 is a glycosylation site (N-linked (GlcNAc...) asparagine). 4 cysteine pairs are disulfide-bonded: Cys-520–Cys-538, Cys-526–Cys-561, Cys-529–Cys-545, and Cys-541–Cys-551. 3 IPT/TIG domains span residues 563–655 (PAIY…FSYV), 657–739 (PIIT…FSYL), and 742–836 (PIVY…LIYV). Thr-582 carries an O-linked (Man) threonine glycan. N-linked (GlcNAc...) asparagine glycans are attached at residues Asn-607 and Asn-635. Thr-676 and Thr-761 each carry an O-linked (Man) threonine glycan. Asn-785, Asn-879, and Asn-930 each carry an N-linked (GlcNAc...) asparagine glycan. The helical transmembrane segment at 935-955 (IAGVVSISIALLLLLAFFLWL) threads the bilayer. The Cytoplasmic portion of the chain corresponds to 956-1381 (KKRKQIKDLG…QDNADGEVDT (426 aa)). Position 966 is a phosphoserine (Ser-966). Phosphothreonine is present on Thr-977. Ser-990, Ser-997, and Ser-1000 each carry phosphoserine. The residue at position 1003 (Tyr-1003) is a Phosphotyrosine. The region spanning 1078–1345 (VHFNEVIGRG…RISAIFSTFI (268 aa)) is the Protein kinase domain. Residues 1084 to 1092 (IGRGHFGCV) and Lys-1110 each bind ATP. The active-site Proton acceptor is the Asp-1204. The segment at 1212-1381 (LDEKFTVKVA…QDNADGEVDT (170 aa)) is interaction with RANBP9. Tyr-1230 carries the phosphotyrosine modification. A phosphotyrosine; by autocatalysis mark is found at Tyr-1234 and Tyr-1235. Thr-1289 is subject to Phosphothreonine. The segment at 1320-1359 (WHPKAEMRPSFSELVSRISAIFSTFIGEHYVHVNATYVNV) is interaction with MUC20. Residues Tyr-1349 and Tyr-1356 each carry the phosphotyrosine; by autocatalysis modification. Tyr-1365 carries the phosphotyrosine modification.

This sequence belongs to the protein kinase superfamily. Tyr protein kinase family. Heterodimer made of an alpha chain (50 kDa) and a beta chain (145 kDa) which are disulfide linked. Binds PLXNB1. Interacts when phosphorylated with downstream effectors including STAT3, PIK3R1, SRC, PCLG1, GRB2 and GAB1. Interacts with SPSB1, SPSB2 and SPSB4. Interacts with INPP5D/SHIP1. When phosphorylated at Tyr-1356, interacts with INPPL1/SHIP2. Interacts with RANBP9 and RANBP10, as well as SPSB1, SPSB2, SPSB3 and SPSB4. SPSB1 binding occurs in the presence and in the absence of HGF, however HGF treatment has a positive effect on this interaction. Interacts with MUC20; prevents interaction with GRB2 and suppresses hepatocyte growth factor-induced cell proliferation. Interacts with GRB10. Interacts with PTPN1 and PTPN2. Interacts with HSP90AA1 and HSP90AB1; the interaction suppresses MET kinase activity. Interacts with tensin TNS3. Interacts (when phosphorylated) with tensin TNS4 (via SH2 domain); the interaction increases MET protein stability by inhibiting MET endocytosis and subsequent lysosomal degradation. Post-translationally, autophosphorylated in response to ligand binding on Tyr-1234 and Tyr-1235 in the kinase domain leading to further phosphorylation of Tyr-1349 and Tyr-1356 in the C-terminal multifunctional docking site. Dephosphorylated by PTPRJ at Tyr-1349 and Tyr-1365. Dephosphorylated by PTPN1 and PTPN2. Ubiquitinated. Ubiquitination by CBL regulates the receptor stability and activity through proteasomal degradation. In terms of processing, O-mannosylation of IPT/TIG domains by TMEM260 is required for protein maturation. O-mannosylated residues are composed of single mannose glycans that are not elongated or modified.

The protein resides in the membrane. It catalyses the reaction L-tyrosyl-[protein] + ATP = O-phospho-L-tyrosyl-[protein] + ADP + H(+). Its activity is regulated as follows. In its inactive state, the C-terminal tail interacts with the catalytic domain and inhibits the kinase activity. Upon ligand binding, the C-terminal tail is displaced and becomes phosphorylated, thus increasing the kinase activity. Receptor tyrosine kinase that transduces signals from the extracellular matrix into the cytoplasm by binding to hepatocyte growth factor/HGF ligand. Regulates many physiological processes including proliferation, scattering, morphogenesis and survival. Ligand binding at the cell surface induces autophosphorylation of MET on its intracellular domain that provides docking sites for downstream signaling molecules. Following activation by ligand, interacts with the PI3-kinase subunit PIK3R1, PLCG1, SRC, GRB2, STAT3 or the adapter GAB1. Recruitment of these downstream effectors by MET leads to the activation of several signaling cascades including the RAS-ERK, PI3 kinase-AKT, or PLCgamma-PKC. The RAS-ERK activation is associated with the morphogenetic effects while PI3K/AKT coordinates prosurvival effects. During embryonic development, MET signaling plays a role in gastrulation, development and migration of muscles and neuronal precursors, angiogenesis and kidney formation. In adults, participates in wound healing as well as organ regeneration and tissue remodeling. Also promotes differentiation and proliferation of hematopoietic cells. This chain is Hepatocyte growth factor receptor (MET), found in Plecturocebus moloch (Dusky titi monkey).